We begin with the raw amino-acid sequence, 106 residues long: UPF0145 protein CKL_2433 (106 aa).

Belongs to the UPF0145 family.

The sequence is that of UPF0145 protein CKL_2433 from Clostridium kluyveri (strain ATCC 8527 / DSM 555 / NBRC 12016 / NCIMB 10680 / K1).